Reading from the N-terminus, the 317-residue chain is Ribosomal RNA small subunit methyltransferase H (317 aa).

Residues 30–32 (GGH), D50, Y74, D95, and Q102 contribute to the S-adenosyl-L-methionine site.

This sequence belongs to the methyltransferase superfamily. RsmH family.

Its subcellular location is the cytoplasm. It catalyses the reaction cytidine(1402) in 16S rRNA + S-adenosyl-L-methionine = N(4)-methylcytidine(1402) in 16S rRNA + S-adenosyl-L-homocysteine + H(+). In terms of biological role, specifically methylates the N4 position of cytidine in position 1402 (C1402) of 16S rRNA. This Nitrosomonas europaea (strain ATCC 19718 / CIP 103999 / KCTC 2705 / NBRC 14298) protein is Ribosomal RNA small subunit methyltransferase H.